A 1036-amino-acid chain; its full sequence is uncharacterized protein (1036 aa).

This is an uncharacterized protein from Schizosaccharomyces pombe (strain 972 / ATCC 24843) (Fission yeast).